The chain runs to 451 residues: Gamma-aminobutyric acid receptor subunit alpha-2 (451 aa).

The first 28 residues, Met-1–Ala-28, serve as a signal peptide directing secretion. The Extracellular portion of the chain corresponds to Asn-29 to Lys-249. The N-linked (GlcNAc...) asparagine glycan is linked to Asn-38. Position 94 (Arg-94) interacts with 4-aminobutanoate. A glycan (N-linked (GlcNAc...) asparagine) is linked at Asn-138. Thr-157 is a 4-aminobutanoate binding site. An intrachain disulfide couples Cys-166 to Cys-180. A glycan (N-linked (GlcNAc...) asparagine) is linked at Asn-201. The chain crosses the membrane as a helical span at residues Ile-250–Val-270. At Ser-271–Pro-280 the chain is on the cytoplasmic side. A helical membrane pass occupies residues Ala-281–Ala-300. Residues Arg-301 to Thr-311 lie on the Extracellular side of the membrane. Residues Ala-312–Ala-332 traverse the membrane as a helical segment. At Thr-333–Met-420 the chain is on the cytoplasmic side. The helical transmembrane segment at Ser-421–Leu-441 threads the bilayer. Topologically, residues Asn-442–Pro-451 are extracellular.

Belongs to the ligand-gated ion channel (TC 1.A.9) family. Gamma-aminobutyric acid receptor (TC 1.A.9.5) subfamily. GABRA2 sub-subfamily. In terms of assembly, heteropentamer, formed by a combination of alpha (GABRA1-6), beta (GABRB1-3), gamma (GABRG1-3), delta (GABRD), epsilon (GABRE), rho (GABRR1-3), pi (GABRP) and theta (GABRQ) subunits, each subunit exhibiting distinct physiological and pharmacological properties. Interacts with UBQLN1. Interacts with KIF21B. Interacts with LHFPL4. Interacts with SHISA7; interaction leads to the regulation of GABA(A) receptor trafficking, channel deactivation kinetics and pharmacology. In terms of processing, glycosylated.

The protein resides in the postsynaptic cell membrane. It localises to the cell membrane. The protein localises to the cytoplasmic vesicle membrane. Its subcellular location is the cell projection. It is found in the dendrite. It carries out the reaction chloride(in) = chloride(out). Activated by pentobarbital. Inhibited by the antagonist bicuculline. Its function is as follows. Alpha subunit of the heteropentameric ligand-gated chloride channel gated by gamma-aminobutyric acid (GABA), a major inhibitory neurotransmitter in the brain. GABA-gated chloride channels, also named GABA(A) receptors (GABAAR), consist of five subunits arranged around a central pore and contain GABA active binding site(s) located at the alpha and beta subunit interface(s). When activated by GABA, GABAARs selectively allow the flow of chloride anions across the cell membrane down their electrochemical gradient. Chloride influx into the postsynaptic neuron following GABAAR opening decreases the neuron ability to generate a new action potential, thereby reducing nerve transmission. The alpha-2 subunit exhibits synaptogenic activity together with beta-2 and very little to no activity together with beta-3, the gamma-2 subunit being necessary but not sufficient to induce rapid synaptic contacts formation. The chain is Gamma-aminobutyric acid receptor subunit alpha-2 (GABRA2) from Bos taurus (Bovine).